The primary structure comprises 386 residues: MATTKSFLILFFMILATTSSTCAKLEEMVTVLSIDGGGIKGIIPAIILEFLEGQLQEVDNNKDARLADYFDVIGGTSTGGLLTAMITTPNENNRPFAAAKDIVPFYFEHGPHIFNYSGSIFGPRYDGKYLMQVLQEKLGETRVHQALTEVAISSFDIKTNKPVIFTKSNLAKSPELDAKMSDICYSTAAAPTYFPPHYFATNTSNGDKYEFNLVDGAVATVADPALLSVSVATRRAEEDPAFASIRSLNYKQLLLLSLGTGTNSEFDKTHTAQETAKWGALQWMLVIQQMTEAASSYMTDYYLSTVFQDLHSQNNYLRVQENALTGTTTKADDASEANMELLVQVGENLLKKPVSKDNPETYEEALKRFAKLLSDRKKFRANKASY.

Positions 1–23 are cleaved as a signal peptide; that stretch reads MATTKSFLILFFMILATTSSTCA. The region spanning 32 to 229 is the PNPLA domain; sequence LSIDGGGIKG…TVADPALLSV (198 aa). The short motif at 36–41 is the GXGXXG element; the sequence is GGGIKG. Positions 75–79 match the GXSXG motif; it reads GTSTG. Residue Ser77 is the Nucleophile of the active site. Asn115 and Asn202 each carry an N-linked (GlcNAc...) asparagine glycan. The Proton acceptor role is filled by Asp215. The DGA/G signature appears at 215 to 217; that stretch reads DGA.

Belongs to the patatin family. As to expression, tuber.

It is found in the vacuole. In terms of biological role, probable lipolytic acyl hydrolase (LAH), an activity which is thought to be involved in the response of tubers to pathogens. The protein is Patatin-07 of Solanum tuberosum (Potato).